A 191-amino-acid polypeptide reads, in one-letter code: MKLLWTSQHIKVTVHIDGKVSKMDVLEAIKTRRSIRKYQDREVPEELIDKILDAAMCGPSAVDERPWHFIVVRNREMLEKIPEVHPYGAMVKDAPVAIIVCCDSSLEKIPGFWVQDCSIASQNILLAAHSLGLGAVWTGVYPLEDRVEGIRRLFSIPEHVIPFSVIPLGYPAENPGTRDLFDPDRIHLEKW.

127-132 (AAHSLG) is a binding site for NAD(+).

Belongs to the nitroreductase family. FMN is required as a cofactor.

This Methanothermobacter thermautotrophicus (strain ATCC 29096 / DSM 1053 / JCM 10044 / NBRC 100330 / Delta H) (Methanobacterium thermoautotrophicum) protein is Putative NADH dehydrogenase/NAD(P)H nitroreductase.